Here is a 1092-residue protein sequence, read N- to C-terminus: DNA polymerase II large subunit (1092 aa).

It belongs to the archaeal DNA polymerase II family. Heterodimer of a large subunit and a small subunit.

It carries out the reaction DNA(n) + a 2'-deoxyribonucleoside 5'-triphosphate = DNA(n+1) + diphosphate. The enzyme catalyses Exonucleolytic cleavage in the 3'- to 5'-direction to yield nucleoside 5'-phosphates.. Functionally, possesses two activities: a DNA synthesis (polymerase) and an exonucleolytic activity that degrades single-stranded DNA in the 3'- to 5'-direction. Has a template-primer preference which is characteristic of a replicative DNA polymerase. In Methanothermobacter thermautotrophicus (strain ATCC 29096 / DSM 1053 / JCM 10044 / NBRC 100330 / Delta H) (Methanobacterium thermoautotrophicum), this protein is DNA polymerase II large subunit (polC).